The sequence spans 281 residues: uncharacterized protein (281 aa).

The helical transmembrane segment at 5–27 threads the bilayer; the sequence is AYVTVIYGNNIYLTGALVLGYTL.

The protein resides in the membrane. This is an uncharacterized protein from Acanthamoeba polyphaga mimivirus (APMV).